A 254-amino-acid chain; its full sequence is Small ribosomal subunit protein mS40 (254 aa).

The N-terminal 33 residues, Met-1–Arg-33, are a transit peptide targeting the mitochondrion. Residue Ser-47 is modified to Phosphoserine. Residues Tyr-218–Ala-254 form a disordered region. Residues Gly-227 to Pro-240 show a composition bias toward pro residues.

The protein belongs to the bacterial ribosomal protein bS18 family. Mitochondrion-specific ribosomal protein mS40 subfamily. Component of the mitochondrial ribosome small subunit (28S) which comprises a 12S rRNA and about 30 distinct proteins.

The protein resides in the mitochondrion. In Mus musculus (Mouse), this protein is Small ribosomal subunit protein mS40 (Mrps18b).